Consider the following 107-residue polypeptide: Protein Rev (107 aa).

Phosphoserine; by host CK2 is present on residues Ser5 and Ser8. A homomultimerization region spans residues 18–26; the sequence is IIKILYQSN. 2 disordered regions span residues 26 to 50 and 82 to 107; these read NPYP…ARQR and NINC…VGNP. The short motif at 34–50 is the Nuclear localization signal and RNA-binding (RRE) element; sequence TRQARRNRRRRWRARQR. Over residues 36–50 the composition is skewed to basic residues; it reads QARRNRRRRWRARQR. The short motif at 73-84 is the Nuclear export signal and binding to XPO1 element; it reads FQLPPIERLNIN. Over residues 86–101 the composition is skewed to low complexity; that stretch reads SESGGTSGTQQPQGNT. The residue at position 92 (Ser92) is a Phosphoserine; by host.

The protein belongs to the HIV-1 REV protein family. As to quaternary structure, homomultimer; when bound to the RRE. Multimeric assembly is essential for activity and may involve XPO1. Binds to human KPNB1, XPO1, TNPO1, RANBP5 and IPO7. Interacts with the viral Integrase. Interacts with human KHDRBS1. Interacts with human NAP1; this interaction decreases Rev multimerization and stimulates its activity. Interacts with human DEAD-box helicases DDX3 and DDX24; these interactions may serve for viral RNA export to the cytoplasm and packaging, respectively. Interacts with human PSIP1; this interaction may inhibit HIV-1 DNA integration by promoting dissociation of the Integrase-LEDGF/p75 complex. Post-translationally, asymmetrically arginine dimethylated at one site by host PRMT6. Methylation impairs the RNA-binding activity and export of viral RNA from the nucleus to the cytoplasm. In terms of processing, phosphorylated by protein kinase CK2. Presence of, and maybe binding to the N-terminus of the regulatory beta subunit of CK2 is necessary for CK2-mediated Rev's phosphorylation.

Its subcellular location is the host nucleus. The protein resides in the host nucleolus. It localises to the host cytoplasm. Escorts unspliced or incompletely spliced viral pre-mRNAs (late transcripts) out of the nucleus of infected cells. These pre-mRNAs carry a recognition sequence called Rev responsive element (RRE) located in the env gene, that is not present in fully spliced viral mRNAs (early transcripts). This function is essential since most viral proteins are translated from unspliced or partially spliced pre-mRNAs which cannot exit the nucleus by the pathway used by fully processed cellular mRNAs. Rev itself is translated from a fully spliced mRNA that readily exits the nucleus. Rev's nuclear localization signal (NLS) binds directly to KPNB1/Importin beta-1 without previous binding to KPNA1/Importin alpha-1. KPNB1 binds to the GDP bound form of RAN (Ran-GDP) and targets Rev to the nucleus. In the nucleus, the conversion from Ran-GDP to Ran-GTP dissociates Rev from KPNB1 and allows Rev's binding to the RRE in viral pre-mRNAs. Rev multimerization on the RRE via cooperative assembly exposes its nuclear export signal (NES) to the surface. Rev can then form a complex with XPO1/CRM1 and Ran-GTP, leading to nuclear export of the complex. Conversion from Ran-GTP to Ran-GDP mediates dissociation of the Rev/RRE/XPO1/RAN complex, so that Rev can return to the nucleus for a subsequent round of export. Beside KPNB1, also seems to interact with TNPO1/Transportin-1, RANBP5/IPO5 and IPO7/RANBP7 for nuclear import. The nucleoporin-like HRB/RIP is an essential cofactor that probably indirectly interacts with Rev to release HIV RNAs from the perinuclear region to the cytoplasm. This is Protein Rev from Human immunodeficiency virus type 1 group M subtype C (isolate 92BR025) (HIV-1).